The sequence spans 1507 residues: Lhr helicase/ probable uracil glycosylase (1507 aa).

The tract at residues 1–856 (MTTNGADPLG…ASLLFGYVGA (856 aa)) is lhr-Core. 4 residues coordinate ATP: Phe-24, Gln-31, Lys-54, and Thr-55. The region spanning 35-226 (WSAISEGNNT…FLSGQAPTTI (192 aa)) is the Helicase ATP-binding domain. Residues Arg-122, Arg-131, Thr-145, Ser-148, and Met-152 each contribute to the ssDNA site. Residues Asp-170 and Glu-171 each coordinate ATP. The DEAH box motif lies at 170–173 (DEVH). Residues Ser-253, Trp-255, and Arg-279 each contribute to the ssDNA site. One can recognise a Helicase C-terminal domain in the interval 257–451 (DVEERIVDLV…VLAQHTVAVA (195 aa)). Residues Ile-377, Arg-394, and His-397 each coordinate ATP. Residues Lys-410, Gln-518, Arg-519, Ile-528, Trp-597, Asp-600, and Arg-777 each coordinate ssDNA. Residues 436–529 (PANPLDVLAQ…LAVTSGGAIP (94 aa)) form a WH domain region. The tract at residues 530–856 (DRGMFTVYLA…ASLLFGYVGA (327 aa)) is domain 4. Residues 857 to 1507 (FMYEGDSPLA…SRTPRGLRLR (651 aa)) are CTD.

Belongs to the Lhr helicase family. As to quaternary structure, monomer. Homooligomerizes, possibly a homotetramer. It depends on Ca(2+) as a cofactor.

The catalysed reaction is Couples ATP hydrolysis with the unwinding of duplex DNA by translocating in the 3'-5' direction.. It catalyses the reaction ATP + H2O = ADP + phosphate + H(+). It carries out the reaction Hydrolyzes single-stranded DNA or mismatched double-stranded DNA and polynucleotides, releasing free uracil.. A 3'-5' helicase involved in repair of at least 3 types of DNA cross-links, mitomycin C (MMC), cisplatin, and psoralen-UVA. Translocates 3'-to-5' on single-stranded (ss)DNA, unwinding any encountered duplex nucleic acid. A 3'-ssDNA loading strand of at least 15 nucleotides is required for helicase activity. An RNA:DNA hybrid with a 3'-ssDNA loading strand is an 8-fold better helicase substrate than 3'-tailed double-stranded (ds)DNA; substrates where the helicase loads on a 3'-ssRNA tail (DNA:RNA and RNA:RNA) are not unwound. Only (d)ATP is hydrolyzed by the protein, which has no ATPase activity in the absence of ssDNA or ssRNA. Arg-279 and Trp-597 are needed to couple ATP hydrolysis to mechanical work; a salt bridge between Arg-280 and Glu-550 closes a clamp around the ssDNA that is not large enough for dsDNA, while Ile-528 wedges between bases of the loading strand. Functionally, excises uracil residues from ssDNA. Uracil residues in DNA can arise as a result of misincorporation of dUMP residues by DNA polymerase or due to deamination of cytosine. This is Lhr helicase/ probable uracil glycosylase from Mycolicibacterium smegmatis (strain ATCC 700084 / mc(2)155) (Mycobacterium smegmatis).